A 106-amino-acid chain; its full sequence is L-rhamnose mutarotase (106 aa).

Tyrosine 20 lines the substrate pocket. Catalysis depends on histidine 24, which acts as the Proton donor. Substrate contacts are provided by residues tyrosine 43 and 78 to 79; that span reads WW.

The protein belongs to the rhamnose mutarotase family. As to quaternary structure, homodimer.

It localises to the cytoplasm. It catalyses the reaction alpha-L-rhamnose = beta-L-rhamnose. It participates in carbohydrate metabolism; L-rhamnose metabolism. Involved in the anomeric conversion of L-rhamnose. The chain is L-rhamnose mutarotase from Rhizobium etli (strain ATCC 51251 / DSM 11541 / JCM 21823 / NBRC 15573 / CFN 42).